Reading from the N-terminus, the 165-residue chain is Nucleotide-binding protein A9601_05361 (165 aa).

Belongs to the YajQ family.

In terms of biological role, nucleotide-binding protein. This is Nucleotide-binding protein A9601_05361 from Prochlorococcus marinus (strain AS9601).